Here is a 452-residue protein sequence, read N- to C-terminus: Glycine receptor subunit alpha-2 (452 aa).

The first 27 residues, 1–27, serve as a signal peptide directing secretion; the sequence is MNRQLVNILTALFAFFLETNHFRTAFC. Residues 28–256 are Extracellular-facing; sequence KDHDSRSGKQ…KFHLERQMGY (229 aa). N72 carries an N-linked (GlcNAc...) asparagine glycan. A glycine-binding site is contributed by R99. Residue R99 participates in strychnine binding. N103 carries N-linked (GlcNAc...) asparagine glycosylation. Position 163 (S163) interacts with glycine. C172 and C186 are joined by a disulfide. Residues E226 and E228 each contribute to the Zn(2+) site. The cysteines at positions 232 and 243 are disulfide-linked. Residue T238 coordinates glycine. A Zn(2+)-binding site is contributed by H249. The chain crosses the membrane as a helical span at residues 257–278; the sequence is YLIQMYIPSLLIVILSWVSFWI. The Cytoplasmic segment spans residues 279-283; it reads NMDAA. Residues 284–304 form a helical membrane-spanning segment; it reads PARVALGITTVLTMTTQSSGS. Residues 305–315 lie on the Extracellular side of the membrane; the sequence is RASLPKVSYVK. Residues 316–336 traverse the membrane as a helical segment; sequence AIDIWMAVCLLFVFAALLEYA. Topologically, residues 337–420 are cytoplasmic; it reads AVNFVSRQHK…FVDRAKRIDT (84 aa). A helical membrane pass occupies residues 421 to 441; sequence ISRAAFPLAFLIFNIFYWITY. Residues 442 to 452 are Extracellular-facing; it reads KIIRHEDVHKK.

Belongs to the ligand-gated ion channel (TC 1.A.9) family. Glycine receptor (TC 1.A.9.3) subfamily. GLRA2 sub-subfamily. As to quaternary structure, interacts with GLRB. Heteropentamer composed of GLRA2 and GLRB. Functional GLRB-GLRA2 heteropentamers contain four GLRA2 subunits and one GLRB subunit, although alternative subunit composition cannot be excluded. Homopentamer (in vitro). Both homopentamers and heteropentamers form functional ion channels, but their characteristics are subtly different.

It localises to the postsynaptic cell membrane. Its subcellular location is the synapse. The protein resides in the cell membrane. It is found in the cell projection. The catalysed reaction is chloride(in) = chloride(out). With respect to regulation, channel opening is triggered by extracellular glycine. Channel opening is also triggered by taurine and beta-alanine. Inhibited by strychnine. Inhibited by picrotoxin. Channel activity is potentiated by 10-100 uM Zn(2+). Channel activity is marginally increased by 50 mM ethanol; it is strongly increased by a combination of 0.5 uM Zn(2+) and 50 mM ethanol. Channel activity is inhibited by 100-1000 uM Zn(2+). In terms of biological role, subunit of heteromeric glycine-gated chloride channels. Plays a role in synaptic plasticity. Contributes to the generation of inhibitory postsynaptic currents, and is involved in the down-regulation of neuronal excitability. Plays a role in cellular responses to ethanol. The chain is Glycine receptor subunit alpha-2 from Homo sapiens (Human).